The sequence spans 86 residues: DNA-directed RNA polymerase subunit omega (86 aa).

Belongs to the RNA polymerase subunit omega family. As to quaternary structure, the RNAP catalytic core consists of 2 alpha, 1 beta, 1 beta' and 1 omega subunit. When a sigma factor is associated with the core the holoenzyme is formed, which can initiate transcription.

It carries out the reaction RNA(n) + a ribonucleoside 5'-triphosphate = RNA(n+1) + diphosphate. Promotes RNA polymerase assembly. Latches the N- and C-terminal regions of the beta' subunit thereby facilitating its interaction with the beta and alpha subunits. The protein is DNA-directed RNA polymerase subunit omega of Agathobacter rectalis (strain ATCC 33656 / DSM 3377 / JCM 17463 / KCTC 5835 / VPI 0990) (Eubacterium rectale).